Consider the following 511-residue polypeptide: V-type proton ATPase subunit B, brain isoform (511 aa).

An ATP-binding site is contributed by Arg400.

It belongs to the ATPase alpha/beta chains family. As to quaternary structure, V-ATPase is a heteromultimeric enzyme made up of two complexes: the ATP-hydrolytic V1 complex and the proton translocation V0 complex. The V1 complex consists of three catalytic AB heterodimers that form a heterohexamer, three peripheral stalks each consisting of EG heterodimers, one central rotor including subunits D and F, and the regulatory subunits C and H. The proton translocation complex V0 consists of the proton transport subunit a, a ring of proteolipid subunits c9c'', rotary subunit d, subunits e and f, and the accessory subunits ATP6AP1/Ac45 and ATP6AP2/PRR. In terms of tissue distribution, kidney; found in early distal nephron, encompassing thick ascending limbs and distal convoluted tubules and in the alpha-intercalated cells of the cortical collecting ducts (at protein level). Expressed in epididymal clear cells (at protein level). Mainly expressed in the organ of Corti and spiral ganglion neurons, in both the early postnatal cochlea (P2) and the adult cochlea (P30).

The protein resides in the apical cell membrane. It localises to the melanosome. It is found in the cytoplasm. The protein localises to the cytoplasmic vesicle. Its subcellular location is the secretory vesicle. The protein resides in the synaptic vesicle membrane. It localises to the clathrin-coated vesicle membrane. Functionally, non-catalytic subunit of the V1 complex of vacuolar(H+)-ATPase (V-ATPase), a multisubunit enzyme composed of a peripheral complex (V1) that hydrolyzes ATP and a membrane integral complex (V0) that translocates protons. V-ATPase is responsible for acidifying and maintaining the pH of intracellular compartments and in some cell types, is targeted to the plasma membrane, where it is responsible for acidifying the extracellular environment. In renal intercalated cells, can partially compensate the lack of ATP6V1B1 and mediate secretion of protons (H+) into the urine under base-line conditions but not in conditions of acid load. The polypeptide is V-type proton ATPase subunit B, brain isoform (Atp6v1b2) (Mus musculus (Mouse)).